Here is a 64-residue protein sequence, read N- to C-terminus: MAGGVKGIGKFFGDVVAEMKRVSWPTRKELTRYTLVVLGTVAFITVFFAVVDYGISALVRGLIE.

The chain crosses the membrane as a helical span at residues Leu-35–Ile-55.

This sequence belongs to the SecE/SEC61-gamma family. Component of the Sec protein translocase complex. Heterotrimer consisting of SecY, SecE and SecG subunits. The heterotrimers can form oligomers, although 1 heterotrimer is thought to be able to translocate proteins. Interacts with the ribosome. Interacts with SecDF, and other proteins may be involved. Interacts with SecA.

The protein resides in the cell membrane. Its function is as follows. Essential subunit of the Sec protein translocation channel SecYEG. Clamps together the 2 halves of SecY. May contact the channel plug during translocation. The sequence is that of Protein translocase subunit SecE from Halalkalibacterium halodurans (strain ATCC BAA-125 / DSM 18197 / FERM 7344 / JCM 9153 / C-125) (Bacillus halodurans).